The sequence spans 279 residues: Sulfur carrier protein FdhD (279 aa).

Cysteine 112 acts as the Cysteine persulfide intermediate in catalysis.

Belongs to the FdhD family.

The protein localises to the cytoplasm. In terms of biological role, required for formate dehydrogenase (FDH) activity. Acts as a sulfur carrier protein that transfers sulfur from IscS to the molybdenum cofactor prior to its insertion into FDH. The chain is Sulfur carrier protein FdhD from Nocardia farcinica (strain IFM 10152).